A 277-amino-acid polypeptide reads, in one-letter code: ATP synthase subunit a (277 aa).

5 helical membrane-spanning segments follow: residues 40 to 60 (AWHVDTLAWSIGLGLLFLIIF), 98 to 118 (SALIAPLALTIFVWVLLMNLM), 154 to 174 (DLNLTFALASGVFILILFYSI), 219 to 239 (LFGNLYASELIFILIATIGYF), and 245 to 265 (FMWAVFHILVLPLQAFIFMML).

It belongs to the ATPase A chain family. F-type ATPases have 2 components, CF(1) - the catalytic core - and CF(0) - the membrane proton channel. CF(1) has five subunits: alpha(3), beta(3), gamma(1), delta(1), epsilon(1). CF(0) has three main subunits: a(1), b(2) and c(9-12). The alpha and beta chains form an alternating ring which encloses part of the gamma chain. CF(1) is attached to CF(0) by a central stalk formed by the gamma and epsilon chains, while a peripheral stalk is formed by the delta and b chains.

It is found in the cell inner membrane. Functionally, key component of the proton channel; it plays a direct role in the translocation of protons across the membrane. The protein is ATP synthase subunit a of Alteromonas mediterranea (strain DSM 17117 / CIP 110805 / LMG 28347 / Deep ecotype).